A 122-amino-acid polypeptide reads, in one-letter code: Large ribosomal subunit protein uL14 (122 aa).

The protein belongs to the universal ribosomal protein uL14 family. In terms of assembly, part of the 50S ribosomal subunit. Forms a cluster with proteins L3 and L19. In the 70S ribosome, L14 and L19 interact and together make contacts with the 16S rRNA in bridges B5 and B8.

In terms of biological role, binds to 23S rRNA. Forms part of two intersubunit bridges in the 70S ribosome. The sequence is that of Large ribosomal subunit protein uL14 from Rickettsia africae (strain ESF-5).